The following is a 253-amino-acid chain: Phosphoribosylaminoimidazole-succinocarboxamide synthase (253 aa).

It belongs to the SAICAR synthetase family.

The catalysed reaction is 5-amino-1-(5-phospho-D-ribosyl)imidazole-4-carboxylate + L-aspartate + ATP = (2S)-2-[5-amino-1-(5-phospho-beta-D-ribosyl)imidazole-4-carboxamido]succinate + ADP + phosphate + 2 H(+). Its pathway is purine metabolism; IMP biosynthesis via de novo pathway; 5-amino-1-(5-phospho-D-ribosyl)imidazole-4-carboxamide from 5-amino-1-(5-phospho-D-ribosyl)imidazole-4-carboxylate: step 1/2. This chain is Phosphoribosylaminoimidazole-succinocarboxamide synthase, found in Roseobacter denitrificans (strain ATCC 33942 / OCh 114) (Erythrobacter sp. (strain OCh 114)).